A 533-amino-acid polypeptide reads, in one-letter code: Flavin-containing monooxygenase 5 (533 aa).

Residue Arg5 is modified to Dimethylated arginine. FAD-binding positions include Gly10–Ser14, Glu33, and Leu41–Trp42. Ser54 bears the Phosphoserine mark. Tyr56 bears the Phosphotyrosine mark. Ser58 carries the post-translational modification Phosphoserine. Residue Asn62–Thr63 participates in FAD binding. Ser196–Asp199 contributes to the NADP(+) binding site. Ser280 carries the post-translational modification Phosphoserine. Thr284 carries the phosphothreonine modification. Position 401 is a phosphoserine (Ser401). The helical transmembrane segment at Leu513–Phe533 threads the bilayer.

This sequence belongs to the FMO family. It depends on FAD as a cofactor. As to expression, expressed in liver (at protein level). Expressed in the mucosal epithelium of the gastrointestinal tract.

The protein localises to the microsome membrane. It localises to the endoplasmic reticulum membrane. It carries out the reaction N,N-dimethylaniline + NADPH + O2 + H(+) = N,N-dimethylaniline N-oxide + NADP(+) + H2O. It catalyses the reaction NADPH + O2 + H(+) = H2O2 + NADP(+). The catalysed reaction is heptan-2-one + NADPH + O2 + H(+) = pentyl acetate + NADP(+) + H2O. The enzyme catalyses octan-3-one + NADPH + O2 + H(+) = pentyl propanoate + NADP(+) + H2O. It carries out the reaction octan-3-one + NADPH + O2 + H(+) = ethyl hexanoate + NADP(+) + H2O. It catalyses the reaction hexan-3-one + NADPH + O2 + H(+) = ethyl butanoate + NADP(+) + H2O. The catalysed reaction is hexan-3-one + NADPH + O2 + H(+) = propyl propanoate + NADP(+) + H2O. The enzyme catalyses heptan-4-one + NADPH + O2 + H(+) = propyl butanoate + NADP(+) + H2O. It carries out the reaction (2E)-geranial + NADPH + O2 + H(+) = (1E)-2,6-dimethylhepta-1,5-dien-1-yl formate + NADP(+) + H2O. It catalyses the reaction sulcatone + NADPH + O2 + H(+) = 4-methylpent-3-en-1-yl acetate + NADP(+) + H2O. In terms of biological role, acts as a Baeyer-Villiger monooxygenase on a broad range of substrates. Catalyzes the insertion of an oxygen atom into a carbon-carbon bond adjacent to a carbonyl, which converts ketones to esters. Active on diverse carbonyl compounds, whereas soft nucleophiles are mostly non- or poorly reactive. In contrast with other forms of FMO it is non- or poorly active on 'classical' substrates such as drugs, pesticides, and dietary components containing soft nucleophilic heteroatoms. Able to oxidize drug molecules bearing a carbonyl group on an aliphatic chain, such as nabumetone and pentoxifylline. Also, in the absence of substrates, shows slow but yet significant NADPH oxidase activity. Acts as a positive modulator of cholesterol biosynthesis as well as glucose homeostasis, promoting metabolic aging via pleiotropic effects. The protein is Flavin-containing monooxygenase 5 of Mus musculus (Mouse).